Reading from the N-terminus, the 108-residue chain is MTVRLGQIMHVNPNYYDEYEKRHSDLPVKFPEMKKALKEAGAHNYSIYLDKKTGTLFAYLEVDDMDKYKAIAEMDACKEWWAYMAPLMDTNPDKSPVTFDLPEVFHLD.

Tyr19 lines the substrate pocket. Catalysis depends on His23, which acts as the Proton donor. Substrate contacts are provided by residues Tyr45 and 80-81; that span reads WW.

It belongs to the rhamnose mutarotase family. In terms of assembly, homodimer.

Its subcellular location is the cytoplasm. It catalyses the reaction alpha-L-rhamnose = beta-L-rhamnose. It functions in the pathway carbohydrate metabolism; L-rhamnose metabolism. Involved in the anomeric conversion of L-rhamnose. The polypeptide is L-rhamnose mutarotase (Ligilactobacillus salivarius (strain UCC118) (Lactobacillus salivarius)).